The primary structure comprises 256 residues: Thiazole synthase (256 aa).

K98 serves as the catalytic Schiff-base intermediate with DXP. Residues G159, 185 to 186, and 207 to 208 each bind 1-deoxy-D-xylulose 5-phosphate; these read AG and NT.

This sequence belongs to the ThiG family. As to quaternary structure, homotetramer. Forms heterodimers with either ThiH or ThiS.

The protein resides in the cytoplasm. It carries out the reaction [ThiS sulfur-carrier protein]-C-terminal-Gly-aminoethanethioate + 2-iminoacetate + 1-deoxy-D-xylulose 5-phosphate = [ThiS sulfur-carrier protein]-C-terminal Gly-Gly + 2-[(2R,5Z)-2-carboxy-4-methylthiazol-5(2H)-ylidene]ethyl phosphate + 2 H2O + H(+). The protein operates within cofactor biosynthesis; thiamine diphosphate biosynthesis. Functionally, catalyzes the rearrangement of 1-deoxy-D-xylulose 5-phosphate (DXP) to produce the thiazole phosphate moiety of thiamine. Sulfur is provided by the thiocarboxylate moiety of the carrier protein ThiS. In vitro, sulfur can be provided by H(2)S. The protein is Thiazole synthase of Syntrophobacter fumaroxidans (strain DSM 10017 / MPOB).